The following is a 412-amino-acid chain: MTTAPSLVPVTTPSQHGAGVPHLGIDPFALDYFADPYPEQETLREAGPVVYLDKWNVYGVARYAEVYAVLNDPLTFCSSRGVGLSDFKKEKPWRPPSLILEADPPAHTRTRAVLSKVLSPATMKRLRDGFAAAADAKIDELLARGGNIDAIADLAEAYPLSVFPDAMGLKQEGRENLLPYAGLVFNAFGPPNELRQSAIERSAPHQAYVAEQCQRPNLAPGGFGACIHAFSDTGEITPEEAPLLVRSLLSAGLDTTVNGIAAAVYCLARFPDEFARLRADPSLARNAFEEAVRFESPVQTFFRTTTRDVELAGATIGEGEKVLMFLGSANRDPRRWDDPDRYDITRKTSGHVGFGSGVHMCVGQLVARLEGEVVLAALARKVAAIEIAGPLKRRFNNTLRGLESLPIQLTPA.

Substrate contacts are provided by residues 94-97 (RPPS) and S247. C361 contributes to the heme binding site.

This sequence belongs to the cytochrome P450 family. In terms of assembly, interacts with the ferredoxin-like iron-sulfur protein ThcC. Requires heme as cofactor.

It is found in the cytoplasm. It catalyses the reaction 4-methoxybenzoate + AH2 + O2 = 4-hydroxybenzoate + formaldehyde + A + H2O. Its function is as follows. The oxidative demethylation of 4-methoxybenzoate requires the participation of the monooxygenase CYP199A2, the ferredoxin-like protein ThcC/RPA1872 and a ferredoxin reductase to mediate the transfer of electrons from NADH to CYP199A2. It is also active with 4-ethylbenzoate. The chain is Cytochrome p450 CYP199A2 from Rhodopseudomonas palustris (strain ATCC BAA-98 / CGA009).